Reading from the N-terminus, the 883-residue chain is MAEDKVREFAETVGIPVERLVSQLEAAGISGRGPEDPLSDLDKATLLEYLRKGRDGGEQDDDQAPSKITLRRKKVSTLKMPASGGGGSGARGPRQTRTVNVEVRKKRTYVKRSVVEAEESKHDVERLERALIEDRKRAEERARREAEEAEARRREQEEAERRQAEAEALRQAEAEREATAETAGVADEADKAEPQPDPEAARLAAEKEEARRREEEKERRRLEQEARREREAEERAARKTGATAPAAKGKQKKGRESLSMGAGKPGRRGGKKGGRRAASGGEAAKQLQHGFAKPTQPVVREVEIPESITVGDLAQKMSVKAAVLIKEMMKQGVMATINQALDQDTAVLLVEEMGHKPVIVRADALEEEVLQDTSQAQEGDKAPRPPVVTVMGHVDHGKTSLLDNIRRAKVADAEAGGITQHIGAYHVETDRGMVTFLDTPGHEAFTAMRARGAQLTDIVVLVVAADDGVMPQTEEAVRHAKAAEVPMVVAVNKIDKPDADPDRVKQELSQMEVIPEEWGGDVQFIHVSAKQGEGLDDLLEAILLQAELMELGAVAEGNASGIVLESSLDKGRGPVATVLVQSGLLKKGDSLLCGTEYGRVRALIDETGKRVDEAGPSIPVVVLGLSGLPSAGDDMVVVDDEKKAREVAEMRKERQRDKRLAQQQAARMENLFNQMKEDEVNTVNLVVKADVQGSAEALQQSLANLSTDDIQVKVISSGVGAINESDVNLALASNAILIGFNVRADAAARRLVQENDVDLHYYSVIYDAIEQVKNAISGMLEPELEEHIIGLAEVKDVFRSSKLGAVAGCLVTEGAVRRKNPIRVLRDNVVIYEGELESLRRHKDDVTEVKSGTECGIGVKNYNDVRIGDQIECYERVEVRREL.

Disordered regions lie at residues 52-102 (KGRD…VNVE) and 115-297 (VEAE…PTQP). Composition is skewed to basic and acidic residues over residues 115-179 (VEAE…REAT) and 204-237 (AAEK…ERAA). Over residues 239–248 (KTGATAPAAK) the composition is skewed to low complexity. Basic residues predominate over residues 265 to 275 (PGRRGGKKGGR). Residues 276 to 285 (RAASGGEAAK) are compositionally biased toward low complexity. Residues 383–550 (PRPPVVTVMG…AILLQAELME (168 aa)) form the tr-type G domain. Residues 392–399 (GHVDHGKT) form a G1 region. GTP is bound at residue 392–399 (GHVDHGKT). The tract at residues 417 to 421 (GITQH) is G2. Residues 438–441 (DTPG) are G3. GTP-binding positions include 438 to 442 (DTPGH) and 492 to 495 (NKID). Positions 492 to 495 (NKID) are G4. Residues 528–530 (SAK) form a G5 region.

The protein belongs to the TRAFAC class translation factor GTPase superfamily. Classic translation factor GTPase family. IF-2 subfamily.

The protein resides in the cytoplasm. One of the essential components for the initiation of protein synthesis. Protects formylmethionyl-tRNA from spontaneous hydrolysis and promotes its binding to the 30S ribosomal subunits. Also involved in the hydrolysis of GTP during the formation of the 70S ribosomal complex. This chain is Translation initiation factor IF-2, found in Alkalilimnicola ehrlichii (strain ATCC BAA-1101 / DSM 17681 / MLHE-1).